Here is a 331-residue protein sequence, read N- to C-terminus: Threonine-phosphate decarboxylase (331 aa).

Lys192 carries the N6-(pyridoxal phosphate)lysine modification.

The protein belongs to the class-I pyridoxal-phosphate-dependent aminotransferase family. In terms of assembly, homodimer. Requires pyridoxal 5'-phosphate as cofactor.

Its subcellular location is the cytoplasm. It catalyses the reaction O-phospho-L-threonine + H(+) = (R)-1-aminopropan-2-yl phosphate + CO2. Its pathway is cofactor biosynthesis; adenosylcobalamin biosynthesis. In terms of biological role, decarboxylates L-threonine-O-3-phosphate to yield (R)-1-amino-2-propanol O-2-phosphate, the precursor for the linkage between the nucleotide loop and the corrin ring in cobalamin. This Pseudomonas aeruginosa (strain ATCC 15692 / DSM 22644 / CIP 104116 / JCM 14847 / LMG 12228 / 1C / PRS 101 / PAO1) protein is Threonine-phosphate decarboxylase (cobC).